A 65-amino-acid polypeptide reads, in one-letter code: Large ribosomal subunit protein bL35 (65 aa).

The protein belongs to the bacterial ribosomal protein bL35 family.

This is Large ribosomal subunit protein bL35 from Erwinia tasmaniensis (strain DSM 17950 / CFBP 7177 / CIP 109463 / NCPPB 4357 / Et1/99).